Here is a 483-residue protein sequence, read N- to C-terminus: Probable L-xylulose kinase (483 aa).

Belongs to the FGGY kinase family. As to quaternary structure, homodimer.

It carries out the reaction L-xylulose + ATP = L-xylulose 5-phosphate + ADP + H(+). The protein is Probable L-xylulose kinase (lyx) of Pasteurella multocida (strain Pm70).